A 75-amino-acid polypeptide reads, in one-letter code: MTEFLFCFSCCIGEQPQPKRRRRIDRSMIGEPMNFVHTAHVGSGDANTGFAMGGSFQDQMKSKGGYTPGISEVAL.

Residues C10 and C11 are each lipidated (S-palmitoyl cysteine). Residues 29 to 42 (IGEPMNFVHTAHVG) form the CRIB domain.

This sequence belongs to the CDC42SE/SPEC family.

It localises to the cytoplasm. The protein resides in the cytoskeleton. It is found in the cell membrane. Probably involved in the organization of the actin cytoskeleton by acting downstream of CDC42, inducing actin filament assembly. The chain is CDC42 small effector protein 2-C (cdc42se2-c) from Xenopus laevis (African clawed frog).